Consider the following 31-residue polypeptide: GFFSTVKNLATNVAGTVIDTLKCKVTGGCRS.

C23 and C29 are disulfide-bonded.

As to expression, expressed by the skin glands.

It localises to the secreted. Antimicrobial activity against Gram-negative bacterium E.coli. In Lithobates palustris (Pickerel frog), this protein is Ranatuerin-2PL.